We begin with the raw amino-acid sequence, 360 residues long: Replication-associated protein (360 aa).

One can recognise a CRESS-DNA virus Rep endonuclease domain in the interval 11 to 114; the sequence is SHRNANTFLT…PLAVFERGTF (104 aa). An RCR-1 motif is present at residues 18–21; the sequence is FLTY. A divalent metal cation is bound by residues glutamate 52, histidine 60, and histidine 62. The RCR-2 motif lies at 60-62; that stretch reads HLH. The active-site For DNA cleavage activity is the tyrosine 100. Positions 100 to 103 match the RCR-3 motif; the sequence is YILK. An a divalent metal cation-binding site is contributed by glutamate 104. The oligomerization stretch occupies residues 175–187; that stretch reads SANKLFPEIQEEF. Residue 229–236 participates in ATP binding; that stretch reads GPTRTGKS. Residues 252–270 are transactivation; the sequence is VDWSSYNEDAIYNIVDDIP. Residues 292-303 carry the Nuclear localization signal motif; the sequence is KYGKKKKVQKKS.

This sequence belongs to the geminiviridae Rep protein family. Homooligomer. Rep binds to repeated DNA motifs (iterons). Forms the O-complex, which is a Rep-DNA complex involved in the initiation of RCR. Part of the C- and V-complexes which are RepA-Rep-DNA complexes involved in the c-sense and v-sense transcription. Mg(2+) serves as cofactor. Requires Mn(2+) as cofactor.

Its subcellular location is the host nucleus. Its function is as follows. Essential for the replication of viral ssDNA. The closed circular ssDNA genome is first converted to a superhelical dsDNA. Rep binds a specific region at the genome origin of replication. It introduces an endonucleolytic nick within the conserved sequence 5'-TAATATTAC-3' in the intergenic region of the genome present in all geminiviruses, thereby initiating the rolling circle replication (RCR). Following cleavage, binds covalently to the 5'-phosphate of DNA as a tyrosyl ester. The cleavage gives rise to a free 3'-OH that serves as a primer for the cellular DNA polymerase. The polymerase synthesizes the (+) strand DNA by rolling circle mechanism. After one round of replication, a Rep-catalyzed nucleotidyl transfer reaction releases a circular single-stranded virus genome, thereby terminating the replication. Displays origin-specific DNA cleavage, nucleotidyl transferase, ATPase and helicase activities. Acts as an inhibitor of C-sense gene transcription. This chain is Replication-associated protein, found in Avena sativa (Oat).